Here is a 1096-residue protein sequence, read N- to C-terminus: Phospholipase D zeta 1 (1096 aa).

A2 is modified (N-acetylalanine). The PX domain occupies 50–204; it reads PKAVIVSVSR…REVCRFLEVS (155 aa). The disordered stretch occupies residues 131 to 152; the sequence is VQDEDADEVPLHQDESAKNRDV. A compositionally biased stretch (basic and acidic residues) spans 139–151; the sequence is VPLHQDESAKNRD. The 109-residue stretch at 234–342 folds into the PH domain; that stretch reads DDSNRCCGCC…WVASINDAAL (109 aa). The region spanning 477–504 is the PLD phosphodiesterase 1 domain; sequence YLWSHHEKLVIVDNQVCFIGGLDLCFGR. Residues H482, K484, and D489 contribute to the active site. Over residues 607–632 the composition is skewed to basic and acidic residues; it reads GRQEESDIESKKEEDSIRGIRRDDSF. Positions 607–691 are disordered; the sequence is GRQEESDIES…DGDTPMRGFV (85 aa). The region spanning 892–919 is the PLD phosphodiesterase 2 domain; the sequence is SQVYVHSKIMIVDDRAALIGSANINDRS. Residues H897, K899, and D904 contribute to the active site.

The protein belongs to the phospholipase D family. PXPH-PLD subfamily. Requires Does not require Ca(2+) or any other cation for activity. as cofactor. Expressed in inflorescences, flowers, siliques, stems, leaves, and roots. Highest expression in roots.

It localises to the cytoplasmic vesicle. The enzyme catalyses a 1,2-diacyl-sn-glycero-3-phosphocholine + H2O = a 1,2-diacyl-sn-glycero-3-phosphate + choline + H(+). Calcium-independent and PIP2-dependent. In terms of biological role, hydrolyzes glycerol-phospholipids at the terminal phosphodiesteric bond to generate phosphatidic acids (PA). Phosphatidylcholine-selective. Regulates root-hair morphogenesis. Contributes to the supply of inorganic phosphorus for cell metabolism and diacylglycerol moieties for galactolipid synthesis in phosphorus-starved roots. Involved in root elongation during phosphate limitation. The chain is Phospholipase D zeta 1 from Arabidopsis thaliana (Mouse-ear cress).